We begin with the raw amino-acid sequence, 1697 residues long: SAC3 family protein B (1697 aa).

Disordered stretches follow at residues 54–134 (PPAS…QPGG), 167–280 (QRPN…SRSN), 306–413 (EATR…EQAR), and 491–512 (ESER…VDGD). The span at 120–134 (QNPSPSSGQPYQPGG) shows a compositional bias: low complexity. Basic and acidic residues predominate over residues 178–192 (DGSRNFLKDHGEHSR). Residues 193–202 (ATSPPATSHI) are compositionally biased toward polar residues. The segment covering 215-227 (RSQDSKRKSRSDI) has biased composition (basic and acidic residues). Composition is skewed to polar residues over residues 233 to 243 (MGFSRRNQSPV), 257 to 280 (PLSS…SRSN), and 335 to 380 (RFST…SPAT). Residues 625–813 (NIEQMNKTSV…KCSKLVHMKK (189 aa)) form the PCI domain.

The protein belongs to the SAC3 family. In terms of assembly, interacts with SAC3A, EER5 and CML19. Interacts with UCH1 and UCH2.

It is found in the nucleus. Functionally, component of the TREX-2 complex (transcription and export complex 2), a muliprotein complex that functions in docking export-competent ribonucleoprotein particles (mRNPs) to the nuclear entrance of the nuclear pore complex (nuclear basket). TREX-2 participates in mRNA export and accurate chromatin positioning in the nucleus by tethering genes to the nuclear periphery. The chain is SAC3 family protein B from Arabidopsis thaliana (Mouse-ear cress).